We begin with the raw amino-acid sequence, 117 residues long: Ig heavy chain V region 345 (117 aa).

The first 19 residues, 1–19 (MNFGLRLIFLVLTLKGVKC), serve as a signal peptide directing secretion. A framework-1 region spans residues 20-49 (EVQLVESGGGLVKPGGSLKLSCAASGFAFS). Cys41 and Cys115 are joined by a disulfide. Residues 50 to 54 (SYDMS) are complementarity-determining-1. The tract at residues 55–68 (WVRQTPEKRLEWVA) is framework-2. The complementarity-determining-2 stretch occupies residues 69–85 (YISSGGGSTYYPDTVKG). The framework-3 stretch occupies residues 86–117 (RFTISRDNAKNTLYLQMSSLKSEDTAMYYCAR).

This chain is Ig heavy chain V region 345, found in Mus musculus (Mouse).